The sequence spans 1279 residues: Maestro heat-like repeat-containing protein family member 7 (1279 aa).

The segment at 1–145 is disordered; it reads MALSRGTSLI…NSSRPCSEDV (145 aa). The span at 39 to 61 shows a compositional bias: low complexity; sequence PDLALAPPPEHALALTPALHPAL. Composition is skewed to polar residues over residues 71 to 106 and 124 to 140; these read PVSN…NHTS and PSST…SSRP. 5 N-linked (GlcNAc...) asparagine glycosylation sites follow: Asn-200, Asn-210, Asn-255, Asn-267, and Asn-296. Position 356 is a phosphoserine (Ser-356). An N-linked (GlcNAc...) asparagine glycan is attached at Asn-541. 2 consecutive transmembrane segments (helical) span residues 548–568 and 722–742; these read TLVT…LLLG and LLPI…ALLM. HEAT repeat units follow at residues 913–950, 992–1029, 1035–1072, and 1080–1117; these read QELC…MEQV, AKVQ…GQGK, AVYV…KLQT, and EQLT…FMNW.

The protein localises to the membrane. The chain is Maestro heat-like repeat-containing protein family member 7 (Mroh7) from Mus musculus (Mouse).